The following is a 117-amino-acid chain: ATP-dependent Clp protease adapter protein ClpS 1 (117 aa).

This sequence belongs to the ClpS family. Binds to the N-terminal domain of the chaperone ClpA.

Involved in the modulation of the specificity of the ClpAP-mediated ATP-dependent protein degradation. The chain is ATP-dependent Clp protease adapter protein ClpS 1 from Agrobacterium fabrum (strain C58 / ATCC 33970) (Agrobacterium tumefaciens (strain C58)).